Here is a 284-residue protein sequence, read N- to C-terminus: 2-dehydro-3-deoxyphosphooctonate aldolase (284 aa).

It belongs to the KdsA family.

The protein localises to the cytoplasm. The enzyme catalyses D-arabinose 5-phosphate + phosphoenolpyruvate + H2O = 3-deoxy-alpha-D-manno-2-octulosonate-8-phosphate + phosphate. The protein operates within carbohydrate biosynthesis; 3-deoxy-D-manno-octulosonate biosynthesis; 3-deoxy-D-manno-octulosonate from D-ribulose 5-phosphate: step 2/3. Its pathway is bacterial outer membrane biogenesis; lipopolysaccharide biosynthesis. This chain is 2-dehydro-3-deoxyphosphooctonate aldolase, found in Pectobacterium atrosepticum (strain SCRI 1043 / ATCC BAA-672) (Erwinia carotovora subsp. atroseptica).